A 600-amino-acid polypeptide reads, in one-letter code: Cationic amino acid transporter 4, vacuolar (600 aa).

Residues 1–32 lie on the Cytoplasmic side of the membrane; the sequence is MNSLVRRKQVDSVHLIKNDGPHQLAKKLSAVD. Residues 33–53 form a helical membrane-spanning segment; sequence LVAIGVGTTIGAGVYILVGTV. Topologically, residues 54–60 are vacuolar; it reads AREHTGP. Residues 61-81 traverse the membrane as a helical segment; that stretch reads ALAVSFFIAGVAAALSACCYA. Topologically, residues 82–92 are cytoplasmic; that stretch reads ELASRCPSAGS. Residues 93–115 form a helical membrane-spanning segment; the sequence is AYHYAYICLGEGIAWLVGWALVL. At 116 to 152 the chain is on the vacuolar side; the sequence is DYTIGGSAIARGITPNLASFFGGLDNLPVFLARQTIP. Residues 153–173 form a helical membrane-spanning segment; the sequence is GVGIVVDPCAALLIMIVTILL. The Cytoplasmic segment spans residues 174–184; the sequence is CFGIKESSTVQ. Residues 185–205 form a helical membrane-spanning segment; sequence AIVTSVNVCTLVFIIVVGGYL. The Vacuolar portion of the chain corresponds to 206–220; sequence ACKTGWVGYDLPSGY. The chain crosses the membrane as a helical span at residues 221–241; sequence FPFGLNGILAGSAVVFFSYIG. Residues 242–264 lie on the Cytoplasmic side of the membrane; it reads FDTVTSTAEEVKNPQRDLPLGIG. A helical membrane pass occupies residues 265 to 285; that stretch reads IALLICCILYMLLSVVIVGLV. Residues 286–308 lie on the Vacuolar side of the membrane; the sequence is PYYSLNPDTPISSAFGDSGMQWA. The chain crosses the membrane as a helical span at residues 309–329; it reads AYILTTGAITALCASLLGSLL. Topologically, residues 330 to 360 are cytoplasmic; it reads AQPRIFMAMARDGLLPAFFSEISPRTQVPVK. A helical transmembrane segment spans residues 361–381; sequence STIAIGVLAAALAFFMDVAQL. S382 is a topological domain (vacuolar). A helical membrane pass occupies residues 383-403; the sequence is EMVSVGTLMAFTAVAVCVLVL. Residues 404–462 are Cytoplasmic-facing; that stretch reads RYVPPDGVPLSSSSQTLSDTDESRAETENFLVDAIESSDSPLLGNETARDEKYFGKRRK. A helical transmembrane segment spans residues 463-483; it reads IAAWSIALVCIGVLGLASAAS. The Vacuolar segment spans residues 484–492; it reads AERLPSFPR. A helical transmembrane segment spans residues 493-513; the sequence is FTICGVSAVILLGSLITLGYI. Residues 514–528 are Cytoplasmic-facing; it reads DEDEERHNFGHKGGF. A helical transmembrane segment spans residues 529-549; the sequence is LCPFVPYLPVLCILINTYLII. A topological domain (vacuolar) is located at residue N550. Residues 551 to 571 form a helical membrane-spanning segment; it reads IGAGTWIRVLIWLLIGSMIYI. The Cytoplasmic portion of the chain corresponds to 572-600; the sequence is FYGRSHSLLNNAVYVPTMTCTRKTTDHLA.

Belongs to the amino acid-polyamine-organocation (APC) superfamily. Cationic amino acid transporter (CAT) (TC 2.A.3.3) family. Expressed in roots, stems, flowers, and leaves.

The protein resides in the vacuole membrane. Functionally, permease involved in the transport of the cationic amino acids. The chain is Cationic amino acid transporter 4, vacuolar (CAT4) from Arabidopsis thaliana (Mouse-ear cress).